Reading from the N-terminus, the 466-residue chain is Replicative helicase loading/DNA remodeling protein DnaB (466 aa).

The segment at Arg3–Gln113 is DDBH1. The DDBH2-1 stretch occupies residues Glu200–Glu292. The DDBH2-2 stretch occupies residues Val293–Asn401.

Belongs to the DnaB/DnaD family. Homotetramer, higher-order oligomers are induced by ssDNA. The DNA replisome assembles sequentially on oriC in this order; DnaA, DnaD, DnaB, DnaI-DnaC helicase. Part of the replication restart primosome, PriA binds first, then DnaD and subsequently DnaB bind.

Helps DnaI load the DnaC replicative helicase onto single-stranded (ss)DNA. During DNA replication from the origin of replication (oriC) in the DNA replisome, DnaB and DnaD are required after DnaA and before subsequent helicase DnaC loading. Component of the replication restart primosome, which reloads the replicative helicase on sites other than oriC. Essential for replication initiation of the chromosome and plasmids. Remodels DNA, laterally compacts supercoiled plasmid and linear DNA. Binds supercoiled, nicked and linear double-stranded (ds)DNA and phage phiX174 single-stranded (ss)DNA; phiX174 ssDNA is a better substrate than for B.subtilis. No binding to phage M13 ssDNA although it induces oligomers. In Staphylococcus aureus (strain NCTC 8325 / PS 47), this protein is Replicative helicase loading/DNA remodeling protein DnaB.